The primary structure comprises 520 residues: Probable kinase 098L (520 aa).

The Protein kinase domain occupies 82–393; it reads LTSVQSFGSK…NSPLLKKGFV (312 aa). ATP is bound by residues 88-96 and Lys111; that span reads FGSKSKQGI. Residue Asp205 is the Proton acceptor of the active site. A coiled-coil region spans residues 416–442; that stretch reads QTAQLIETDKEILDNLIDDLELKIVRK.

The protein belongs to the protein kinase superfamily.

Its function is as follows. Probable kinase. The chain is Probable kinase 098L from Aedes vexans (Inland floodwater mosquito).